Here is a 547-residue protein sequence, read N- to C-terminus: Chaperonin GroEL (547 aa).

Residues 30–33 (TLGP), Lys51, 87–91 (DGTTT), Gly415, 479–481 (NAA), and Asp495 each bind ATP.

It belongs to the chaperonin (HSP60) family. In terms of assembly, forms a cylinder of 14 subunits composed of two heptameric rings stacked back-to-back. Interacts with the co-chaperonin GroES.

It is found in the cytoplasm. The catalysed reaction is ATP + H2O + a folded polypeptide = ADP + phosphate + an unfolded polypeptide.. In terms of biological role, together with its co-chaperonin GroES, plays an essential role in assisting protein folding. The GroEL-GroES system forms a nano-cage that allows encapsulation of the non-native substrate proteins and provides a physical environment optimized to promote and accelerate protein folding. This chain is Chaperonin GroEL, found in Enterobacter sp. (strain 638).